The following is a 217-amino-acid chain: CXXC-type zinc finger protein 4 (217 aa).

Positions 1–20 are disordered; sequence MHRNDSQRLGKPGGAPESLQ. The segment at 122-163 adopts a CXXC-type zinc-finger fold; sequence AKKKRKRCGVCVPCKRLINCGVCSSCRNRKTGHQICKFRKCE. 8 residues coordinate Zn(2+): Cys129, Cys132, Cys135, Cys141, Cys144, Cys147, Cys157, and Cys162.

Its subcellular location is the cytoplasm. Its function is as follows. Acts as a negative regulator of the Wnt signaling pathway required for anterior neural structure formation. Ectopic expression induces ventralization. Binds preferentially to DNA containing cytidine-phosphate-guanosine (CpG) dinucleotides over CpH (H=A, T, and C), hemimethylated-CpG and hemimethylated-hydroxymethyl-CpG. The protein is CXXC-type zinc finger protein 4 (cxxc4) of Xenopus laevis (African clawed frog).